We begin with the raw amino-acid sequence, 131 residues long: Profilin-5 (131 aa).

Cys13 and Cys115 are disulfide-bonded. Residues 81-97 (AVIRGKKGAGGITIKKT) carry the Involved in PIP2 interaction motif. Thr111 carries the post-translational modification Phosphothreonine.

The protein belongs to the profilin family. Occurs in many kinds of cells as a complex with monomeric actin in a 1:1 ratio. Post-translationally, phosphorylated by MAP kinases.

It localises to the cytoplasm. The protein resides in the cytoskeleton. Binds to actin and affects the structure of the cytoskeleton. At high concentrations, profilin prevents the polymerization of actin, whereas it enhances it at low concentrations. This is Profilin-5 from Phleum pratense (Common timothy).